Reading from the N-terminus, the 675-residue chain is MAAAKVALTKRADPAELRTIFLKYASIEKNGEFFMSPNDFVTRYLNIFGESQPNPKTVELLSGVVDQTKDGLISFQEFVAFESVLCAPDALFMVAFQLFDKAGKGEVTFEDVKQVFGQTTIHQHIPFNWDSEFVQLHFGKERKRHLTYAEFTQFLLEIQLEHAKQAFVQRDNARTGRVTAIDFRDIMVTIRPHVLTPFVEECLVAAAGGTTSHQVSFSYFNGFNSLLNNMELIRKIYSTLAGTRKDVEVTKEEFVLAAQKFGQVTPMEVDILFQLADLYEPRGRMTLADIERIAPLEEGTLPFNLAEAQRQKASGDSARPVLLQVAESAYRFGLGSVAGAVGATAVYPIDLVKTRMQNQRSTGSFVGELMYKNSFDCFKKVLRYEGFFGLYRGLLPQLLGVAPEKAIKLTVNDFVRDKFMHKDGSVPLAAEILAGGCAGGSQVIFTNPLEIVKIRLQVAGEITTGPRVSALSVVRDLGFFGIYKGAKACFLRDIPFSAIYFPCYAHVKASFANEDGQVSPGSLLLAGAIAGMPAASLVTPADVIKTRLQVAARAGQTTYSGVIDCFRKILREEGPKALWKGAGARVFRSSPQFGVTLLTYELLQRWFYIDFGGVKPMGSEPVPKSRINLPAPNPDHVGGYKLAVATFAGIENKFGLYLPLFKPSVSTSKAIGGGP.

Position 2 is an N-acetylalanine (Ala2). The segment at 2–295 (AAAKVALTKR…TLADIERIAP (294 aa)) is regulatory N-terminal domain. Topologically, residues 2–331 (AAAKVALTKR…LLQVAESAYR (330 aa)) are mitochondrial intermembrane. EF-hand domains follow at residues 51 to 86 (SQPN…SVLC), 87 to 122 (APDA…TTIH), 125 to 157 (IPFN…FLLE), and 158 to 193 (IQLE…IRPH). Ca(2+)-binding residues include Asp66, Thr68, Asp70, Leu72, and Glu77. A linker loop domain region spans residues 296-311 (LEEGTLPFNLAEAQRQ). The interval 321-612 (VLLQVAESAY…LQRWFYIDFG (292 aa)) is carrier domain. 3 Solcar repeats span residues 326–418 (AESA…VRDK), 426–510 (VPLA…VKAS), and 518–606 (VSPG…LQRW). Residues 332-349 (FGLGSVAGAVGATAVYPI) traverse the membrane as a helical segment. The Mitochondrial matrix portion of the chain corresponds to 350 to 392 (DLVKTRMQNQRSTGSFVGELMYKNSFDCFKKVLRYEGFFGLYR). Residues Lys353 and Lys372 each carry the N6-acetyllysine modification. Residues 393–412 (GLLPQLLGVAPEKAIKLTVN) traverse the membrane as a helical segment. The Mitochondrial intermembrane segment spans residues 413–435 (DFVRDKFMHKDGSVPLAAEILAG). A helical membrane pass occupies residues 436 to 449 (GCAGGSQVIFTNPL). At 450-484 (EIVKIRLQVAGEITTGPRVSALSVVRDLGFFGIYK) the chain is on the mitochondrial matrix side. Lys453 carries the N6-methyllysine modification. N6-acetyllysine; alternate is present on Lys484. The residue at position 484 (Lys484) is an N6-succinyllysine; alternate. A helical transmembrane segment spans residues 485-504 (GAKACFLRDIPFSAIYFPCY). The Mitochondrial intermembrane segment spans residues 505–523 (AHVKASFANEDGQVSPGSL). Residues 524-541 (LLAGAIAGMPAASLVTPA) traverse the membrane as a helical segment. Over 542–580 (DVIKTRLQVAARAGQTTYSGVIDCFRKILREEGPKALWK) the chain is Mitochondrial matrix. Lys580 carries the N6-succinyllysine modification. The helical transmembrane segment at 581 to 600 (GAGARVFRSSPQFGVTLLTY) threads the bilayer. The Mitochondrial intermembrane segment spans residues 601-675 (ELLQRWFYID…STSKAIGGGP (75 aa)). Residues 613–675 (GVKPMGSEPV…STSKAIGGGP (63 aa)) are C-terminal domain. N6-acetyllysine is present on Lys662. Residue Ser666 is modified to Phosphoserine.

This sequence belongs to the mitochondrial carrier (TC 2.A.29) family. In terms of assembly, homodimer (via N-terminus). In terms of tissue distribution, high levels in liver and low levels in kidney, pancreas, placenta, heart and brain.

The protein resides in the mitochondrion inner membrane. The catalysed reaction is L-aspartate(in) + L-glutamate(out) + H(+)(out) = L-aspartate(out) + L-glutamate(in) + H(+)(in). The enzyme catalyses 3-sulfino-L-alanine(out) + L-glutamate(in) + H(+)(in) = 3-sulfino-L-alanine(in) + L-glutamate(out) + H(+)(out). It catalyses the reaction 3-sulfino-L-alanine(out) + L-aspartate(in) = 3-sulfino-L-alanine(in) + L-aspartate(out). With respect to regulation, activated by calcium-binding in the mitochondrial intermembrane space. Inhibited by pyridoxal 5'-phosphate, bathophenathroline, mercurials, diethyl pyrocarbonate and N-ethylmaleimide. Mitochondrial electrogenic aspartate/glutamate antiporter that favors efflux of aspartate and entry of glutamate and proton within the mitochondria as part of the malate-aspartate shuttle. Also mediates the uptake of L-cysteinesulfinate (3-sulfino-L-alanine) by mitochondria in exchange of L-glutamate and proton. Can also exchange L-cysteinesulfinate with aspartate in their anionic form without any proton translocation. Lacks transport activity towards gamma-aminobutyric acid (GABA). The protein is Electrogenic aspartate/glutamate antiporter SLC25A13, mitochondrial of Homo sapiens (Human).